A 493-amino-acid chain; its full sequence is Probable glycine dehydrogenase (decarboxylating) subunit 2 (493 aa).

N6-(pyridoxal phosphate)lysine is present on lysine 269.

Belongs to the GcvP family. C-terminal subunit subfamily. As to quaternary structure, the glycine cleavage system is composed of four proteins: P, T, L and H. In this organism, the P 'protein' is a heterodimer of two subunits. The cofactor is pyridoxal 5'-phosphate.

The catalysed reaction is N(6)-[(R)-lipoyl]-L-lysyl-[glycine-cleavage complex H protein] + glycine + H(+) = N(6)-[(R)-S(8)-aminomethyldihydrolipoyl]-L-lysyl-[glycine-cleavage complex H protein] + CO2. Functionally, the glycine cleavage system catalyzes the degradation of glycine. The P protein binds the alpha-amino group of glycine through its pyridoxal phosphate cofactor; CO(2) is released and the remaining methylamine moiety is then transferred to the lipoamide cofactor of the H protein. The chain is Probable glycine dehydrogenase (decarboxylating) subunit 2 from Chloroherpeton thalassium (strain ATCC 35110 / GB-78).